Here is a 446-residue protein sequence, read N- to C-terminus: UDP-N-acetylmuramoylalanine--D-glutamate ligase (446 aa).

ATP is bound at residue 115–121; that stretch reads GTNGKTT.

The protein belongs to the MurCDEF family.

The protein resides in the cytoplasm. The enzyme catalyses UDP-N-acetyl-alpha-D-muramoyl-L-alanine + D-glutamate + ATP = UDP-N-acetyl-alpha-D-muramoyl-L-alanyl-D-glutamate + ADP + phosphate + H(+). The protein operates within cell wall biogenesis; peptidoglycan biosynthesis. Cell wall formation. Catalyzes the addition of glutamate to the nucleotide precursor UDP-N-acetylmuramoyl-L-alanine (UMA). This Pelobacter propionicus (strain DSM 2379 / NBRC 103807 / OttBd1) protein is UDP-N-acetylmuramoylalanine--D-glutamate ligase.